Consider the following 185-residue polypeptide: dCTP deaminase (185 aa).

DCTP-binding positions include 107-112 (KSTYAR), 131-133 (TLE), glutamine 152, tyrosine 166, and glutamine 176. Catalysis depends on glutamate 133, which acts as the Proton donor/acceptor.

It belongs to the dCTP deaminase family. Homotrimer.

It catalyses the reaction dCTP + H2O + H(+) = dUTP + NH4(+). The protein operates within pyrimidine metabolism; dUMP biosynthesis; dUMP from dCTP (dUTP route): step 1/2. Its function is as follows. Catalyzes the deamination of dCTP to dUTP. The polypeptide is dCTP deaminase (Anaplasma marginale (strain Florida)).